The following is a 100-amino-acid chain: Small ribosomal subunit protein uS14 (100 aa).

The protein belongs to the universal ribosomal protein uS14 family. As to quaternary structure, part of the 30S ribosomal subunit. Contacts proteins S3 and S10.

Binds 16S rRNA, required for the assembly of 30S particles and may also be responsible for determining the conformation of the 16S rRNA at the A site. This Synechococcus sp. (strain CC9605) protein is Small ribosomal subunit protein uS14.